A 49-amino-acid chain; its full sequence is Large ribosomal subunit protein bL33A (49 aa).

The tract at residues 20–49 (KKNKRNNPDRVEFKKYCPRDKKSTLHRETK) is disordered. Positions 25 to 49 (NNPDRVEFKKYCPRDKKSTLHRETK) are enriched in basic and acidic residues.

This sequence belongs to the bacterial ribosomal protein bL33 family. Part of the 50S ribosomal subunit. Interacts with VmlR.

The chain is Large ribosomal subunit protein bL33A (rpmGA) from Bacillus subtilis (strain 168).